Reading from the N-terminus, the 64-residue chain is MAKAAKTIKVEQTGSAIRRHHSQRSTLVGLKLNKIGRTSELQDTPEIRGMIAKVRHIVRVIDET.

The tract at residues 1–22 is disordered; sequence MAKAAKTIKVEQTGSAIRRHHS.

This sequence belongs to the universal ribosomal protein uL30 family. As to quaternary structure, part of the 50S ribosomal subunit.

This is Large ribosomal subunit protein uL30 from Nitrobacter winogradskyi (strain ATCC 25391 / DSM 10237 / CIP 104748 / NCIMB 11846 / Nb-255).